A 612-amino-acid chain; its full sequence is Protein cereblon (612 aa).

Positions 1–11 (MDDEETAEIED) are enriched in acidic residues. 3 disordered regions span residues 1–30 (MDDEETAEIEDVNVLVPATGGEGPVDGASA), 58–133 (MELI…NPHP), and 181–211 (QERRRSRTSEEGEASSEPPHTPPPPRSPYDV). Positions 69–81 (AADAPDAAASTGS) are enriched in low complexity. A compositionally biased stretch (basic and acidic residues) spans 181 to 190 (QERRRSRTSE). Positions 250–478 (HMLIFLHQHI…IIGSTLKDES (229 aa)) constitute a Lon N-terminal domain. A CULT domain is found at 477–586 (ESVFYCRYCN…LAGSSVRIGK (110 aa)). Zn(2+) is bound by residues Cys482, Cys485, Cys551, and Cys554.

Belongs to the CRBN family. Likely a component of a DCX (DDB1-CUL4-X-box) protein ligase complex. May interact with pic/DDB1. In terms of processing, ubiquitinated.

It localises to the nucleus. The protein operates within protein modification; protein ubiquitination. Substrate recognition component of a DCX (DDB1-CUL4-X-box) E3 protein ligase complex that mediates the ubiquitination and subsequent proteasomal degradation of target proteins. Has an essential role in mediating growth by negatively regulating insulin signaling. It also has a role in maintaining presynaptic function in the neuromuscular junction synapses of third-instar larvae. This is Protein cereblon from Drosophila willistoni (Fruit fly).